We begin with the raw amino-acid sequence, 691 residues long: Menaquinone reductase, molybdopterin-binding-like subunit (691 aa).

The tat-type signal signal peptide spans 1 to 27 (MALDRRGFLKFIGGATAGILATPVVWK). Residues 50 to 106 (NSYVPTVSKLCPTGIGVRVRLVDGRPVRVIGNPEHPLSKGGVSSIAAAEVQMLYSPA) form the 4Fe-4S Mo/W bis-MGD-type domain.

The protein belongs to the prokaryotic molybdopterin-containing oxidoreductase family. As to quaternary structure, the Qrc complex is composed of four subunits: QrcA, QrcB, QrcC and QrcD. Can form a supercomplex with the [NiFe] hydrogenase HynA1 and the tetraheme Type I cytochrome c3 TpIc(3), its physiological electron donors. It depends on There is no molybdenum or tungsten pterin cofactor present in the Qrc complex, despite the similarity of QrcB to molybdopterin-containing oxidoreductases. as a cofactor. In terms of processing, predicted to be exported by the Tat system. The position of the signal peptide cleavage has not been experimentally proven.

Its subcellular location is the periplasm. In terms of biological role, component of the respiratory Qrc complex, that catalyzes the reduction of the menaquinone pool using electrons transferred from the reduced periplasmic cytochrome c3, and which is probably involved in sulfate respiration. Is likely essential for growth on H(2) or formate since the periplasmic hydrogenases and/or formate dehydrogenases act as primary electron donors for the Qrc complex. The function of the QrcB subunit is unknown; in the absence of a catalytic site, it may provide a structural scaffold for the other subunits. The sequence is that of Menaquinone reductase, molybdopterin-binding-like subunit from Nitratidesulfovibrio vulgaris (strain ATCC 29579 / DSM 644 / CCUG 34227 / NCIMB 8303 / VKM B-1760 / Hildenborough) (Desulfovibrio vulgaris).